The sequence spans 421 residues: 4-hydroxy-3-methylbut-2-en-1-yl diphosphate synthase (flavodoxin) (421 aa).

[4Fe-4S] cluster contacts are provided by C298, C301, C344, and E351.

The protein belongs to the IspG family. The cofactor is [4Fe-4S] cluster.

It catalyses the reaction (2E)-4-hydroxy-3-methylbut-2-enyl diphosphate + oxidized [flavodoxin] + H2O + 2 H(+) = 2-C-methyl-D-erythritol 2,4-cyclic diphosphate + reduced [flavodoxin]. It functions in the pathway isoprenoid biosynthesis; isopentenyl diphosphate biosynthesis via DXP pathway; isopentenyl diphosphate from 1-deoxy-D-xylulose 5-phosphate: step 5/6. Converts 2C-methyl-D-erythritol 2,4-cyclodiphosphate (ME-2,4cPP) into 1-hydroxy-2-methyl-2-(E)-butenyl 4-diphosphate. This is 4-hydroxy-3-methylbut-2-en-1-yl diphosphate synthase (flavodoxin) from Neisseria gonorrhoeae (strain ATCC 700825 / FA 1090).